Reading from the N-terminus, the 295-residue chain is Ribosomal protein L11 methyltransferase (295 aa).

Residues T146, G167, D189, and N231 each coordinate S-adenosyl-L-methionine.

It belongs to the methyltransferase superfamily. PrmA family.

The protein resides in the cytoplasm. The catalysed reaction is L-lysyl-[protein] + 3 S-adenosyl-L-methionine = N(6),N(6),N(6)-trimethyl-L-lysyl-[protein] + 3 S-adenosyl-L-homocysteine + 3 H(+). Methylates ribosomal protein L11. This Vibrio cholerae serotype O1 (strain M66-2) protein is Ribosomal protein L11 methyltransferase.